We begin with the raw amino-acid sequence, 344 residues long: Autophagy-related protein 14 (344 aa).

Residues 3–18 (CPICHHRAHVVYCAHC) are cysteine repeats. Residues 25-156 (LLLKLKLDLI…VSKICESARD (132 aa)) are a coiled coil.

It belongs to the ATG14 family. In terms of assembly, component of the autophagy-specific VPS34 PI3-kinase complex I composed of VPS15, VPS30, VPS34, ATG14 and ATG38. Interacts directly with ATG38.

It localises to the preautophagosomal structure membrane. The protein localises to the vacuole membrane. Required for cytoplasm to vacuole transport (Cvt) and autophagy as a part of the autophagy-specific VPS34 PI3-kinase complex I. This complex is essential to recruit the ATG8-phosphatidylinositol conjugate and the ATG12-ATG5 conjugate to the pre-autophagosomal structure. ATG14 mediates the specific binding of the VPS34 PI3-kinase complex I to the preautophagosomal structure (PAS). In Saccharomyces cerevisiae (strain ATCC 204508 / S288c) (Baker's yeast), this protein is Autophagy-related protein 14 (ATG14).